Consider the following 505-residue polypeptide: Maturase K (505 aa).

This sequence belongs to the intron maturase 2 family. MatK subfamily.

It localises to the plastid. The protein resides in the chloroplast. Its function is as follows. Usually encoded in the trnK tRNA gene intron. Probably assists in splicing its own and other chloroplast group II introns. The polypeptide is Maturase K (Morus alba (White mulberry)).